Here is a 299-residue protein sequence, read N- to C-terminus: Serine/threonine-protein kinase 1 (299 aa).

The region spanning 39–277 (IATKPMFEGG…FKGLVSHPWF (239 aa)) is the Protein kinase domain. ATP-binding positions include 45–53 (FEGGRRNNV) and lysine 66. Aspartate 153 acts as the Proton acceptor in catalysis.

The protein belongs to the protein kinase superfamily. Ser/Thr protein kinase family.

Its subcellular location is the virion. The protein localises to the host cytoplasm. It carries out the reaction L-seryl-[protein] + ATP = O-phospho-L-seryl-[protein] + ADP + H(+). The enzyme catalyses L-threonyl-[protein] + ATP = O-phospho-L-threonyl-[protein] + ADP + H(+). In terms of biological role, essential for viral replication. It may mediate the virus progression through DNA replication. This is Serine/threonine-protein kinase 1 from African swine fever virus (isolate Tick/Malawi/Lil 20-1/1983) (ASFV).